The primary structure comprises 182 residues: Small ribosomal subunit protein uS4c (182 aa).

An S4 RNA-binding domain is found at 82–143 (MRLDNILFRL…KERSKVLIQN (62 aa)).

It belongs to the universal ribosomal protein uS4 family. As to quaternary structure, part of the 30S ribosomal subunit. Contacts protein S5. The interaction surface between S4 and S5 is involved in control of translational fidelity.

It is found in the plastid. It localises to the chloroplast. Functionally, one of the primary rRNA binding proteins, it binds directly to 16S rRNA where it nucleates assembly of the body of the 30S subunit. In terms of biological role, with S5 and S12 plays an important role in translational accuracy. This is Small ribosomal subunit protein uS4c (rps4) from Neomarica sp. (strain Lejeune 1997).